A 447-amino-acid chain; its full sequence is Methylenetetrahydrofolate--tRNA-(uracil-5-)-methyltransferase TrmFO (447 aa).

10-15 (GAGLAG) is a binding site for FAD.

It belongs to the MnmG family. TrmFO subfamily. It depends on FAD as a cofactor.

Its subcellular location is the cytoplasm. It catalyses the reaction uridine(54) in tRNA + (6R)-5,10-methylene-5,6,7,8-tetrahydrofolate + NADH + H(+) = 5-methyluridine(54) in tRNA + (6S)-5,6,7,8-tetrahydrofolate + NAD(+). The catalysed reaction is uridine(54) in tRNA + (6R)-5,10-methylene-5,6,7,8-tetrahydrofolate + NADPH + H(+) = 5-methyluridine(54) in tRNA + (6S)-5,6,7,8-tetrahydrofolate + NADP(+). Catalyzes the folate-dependent formation of 5-methyl-uridine at position 54 (M-5-U54) in all tRNAs. In Lactococcus lactis subsp. lactis (strain IL1403) (Streptococcus lactis), this protein is Methylenetetrahydrofolate--tRNA-(uracil-5-)-methyltransferase TrmFO.